The primary structure comprises 166 residues: Cyanate hydratase (166 aa).

Active-site residues include arginine 92, glutamate 95, and serine 118.

This sequence belongs to the cyanase family.

It carries out the reaction cyanate + hydrogencarbonate + 3 H(+) = NH4(+) + 2 CO2. Functionally, catalyzes the reaction of cyanate with bicarbonate to produce ammonia and carbon dioxide. This is Cyanate hydratase from Sorghum bicolor (Sorghum).